Reading from the N-terminus, the 326-residue chain is MASAALIDSDMEPTLQPILDQKTLRWIFVGGKGGVGKTTTSCSLAIQLAKHRKSVLLISTDPAHNLSDAFNQKFGKDARLINGFDNLSAMEIDPNGSIQDLLAGGGESGEDAMAGLGGMGNMMQDLAFSIPGVDEAMSFAEVLKQVKSMSYEVIIFDTAPTGHTLRFLQFPTVMEKALSKVSQLSRQFGPMLNSFLGGGGRLPNGQNIDELVEKMEALRGTISEVNGQFKDADLTTFVCVCIPEFLSLYETERMIQELNSYEIDTHSIVVNQLLFPKQDNPCEQCNARRKMQKKYLEQIEELYDEFNVVKMPLLVEEVRGKEKLEK.

32-39 (KGGVGKTT) lines the ATP pocket. D61 is a catalytic residue. The ATP site is built by E244 and N271. Zn(2+)-binding residues include C282 and C285.

The protein belongs to the arsA ATPase family. As to quaternary structure, homodimer.

The protein localises to the cytoplasm. The protein resides in the endoplasmic reticulum. In terms of biological role, ATPase required for the post-translational delivery of tail-anchored (TA) proteins to the endoplasmic reticulum. Recognizes and selectively binds the transmembrane domain of TA proteins in the cytosol. This complex then targets to the endoplasmic reticulum by membrane-bound receptors, where the tail-anchored protein is released for insertion. This process is regulated by ATP binding and hydrolysis. ATP binding drives the homodimer towards the closed dimer state, facilitating recognition of newly synthesized TA membrane proteins. ATP hydrolysis is required for insertion. Subsequently, the homodimer reverts towards the open dimer state, lowering its affinity for the membrane-bound receptor, and returning it to the cytosol to initiate a new round of targeting. The chain is ATPase GET3 from Phaeosphaeria nodorum (strain SN15 / ATCC MYA-4574 / FGSC 10173) (Glume blotch fungus).